Consider the following 262-residue polypeptide: MKILITNDDGVNSSGIIAARRAVEDLGETIIVAPATQQSGIGHALTLFEPVRVSEVTLRDGSGAYAVSGTHTDAVIIGIFELMDEKPDLVISGINMGENLGKSELTTSGTIGAAMEAAVHGVPSLAVSLQVRRGDIKFHDGHVDVDFSLAAELTGRVASRILRRGLPEGVDFLNLNVPSHPASDEIRITRLGDRMYNVHIKKRLDPRGRPYYWIDGDPAGTDFRVQMSTHLRLKTPPPSPPYHSTAQQALTQWRAGLIRARN.

A divalent metal cation is bound by residues D8, D9, S39, and N95.

This sequence belongs to the SurE nucleotidase family. A divalent metal cation serves as cofactor.

The protein resides in the cytoplasm. It carries out the reaction a ribonucleoside 5'-phosphate + H2O = a ribonucleoside + phosphate. Functionally, nucleotidase that shows phosphatase activity on nucleoside 5'-monophosphates. This Methanothermobacter thermautotrophicus (strain ATCC 29096 / DSM 1053 / JCM 10044 / NBRC 100330 / Delta H) (Methanobacterium thermoautotrophicum) protein is 5'-nucleotidase SurE.